The chain runs to 342 residues: Trans-3-hydroxy-L-proline dehydratase (342 aa).

Residue S90 is the Proton acceptor of the active site. Substrate is bound by residues 91-92 (GS), D252, and 257-258 (GT).

It belongs to the proline racemase family.

The catalysed reaction is trans-3-hydroxy-L-proline = 1-pyrroline-2-carboxylate + H2O. It catalyses the reaction trans-4-hydroxy-L-proline = cis-4-hydroxy-D-proline. Functionally, catalyzes the dehydration of trans-3-hydroxy-L-proline (t3LHyp) to Delta(1)-pyrroline-2-carboxylate (Pyr2C). Can also catalyze the epimerization of trans-4-hydroxy-L-proline (t4LHyp) to cis-4-hydroxy-D-proline (c4DHyp), albeit with 30-fold lower efficiency. Is likely involved in both degradation pathways that convert t3LHyp to L-proline and t4LHyp to alpha-ketoglutarate, which would allow A.tumefaciens to grow on t3LHyp or t4LHyp as a sole carbon source. Displays no proline racemase activity. The polypeptide is Trans-3-hydroxy-L-proline dehydratase (Agrobacterium fabrum (strain C58 / ATCC 33970) (Agrobacterium tumefaciens (strain C58))).